A 412-amino-acid chain; its full sequence is Serine hydroxymethyltransferase (412 aa).

Residues Leu-125 and Gly-129–Leu-131 contribute to the (6S)-5,6,7,8-tetrahydrofolate site. An N6-(pyridoxal phosphate)lysine modification is found at Lys-234. Glu-250 serves as a coordination point for (6S)-5,6,7,8-tetrahydrofolate.

This sequence belongs to the SHMT family. In terms of assembly, homodimer. Pyridoxal 5'-phosphate is required as a cofactor.

The protein localises to the cytoplasm. It catalyses the reaction (6R)-5,10-methylene-5,6,7,8-tetrahydrofolate + glycine + H2O = (6S)-5,6,7,8-tetrahydrofolate + L-serine. Its pathway is one-carbon metabolism; tetrahydrofolate interconversion. It participates in amino-acid biosynthesis; glycine biosynthesis; glycine from L-serine: step 1/1. In terms of biological role, catalyzes the reversible interconversion of serine and glycine with tetrahydrofolate (THF) serving as the one-carbon carrier. This reaction serves as the major source of one-carbon groups required for the biosynthesis of purines, thymidylate, methionine, and other important biomolecules. Also exhibits THF-independent aldolase activity toward beta-hydroxyamino acids, producing glycine and aldehydes, via a retro-aldol mechanism. This is Serine hydroxymethyltransferase from Deinococcus geothermalis (strain DSM 11300 / CIP 105573 / AG-3a).